The sequence spans 476 residues: Glutathione synthetase (476 aa).

Arg117 is a binding site for substrate. Glu137 lines the ATP pocket. The Mg(2+) site is built by Glu137 and Asn139. Residues 141–144 (ISSS), 211–213 (ERN), Gln217, and 267–270 (RAGY) contribute to the substrate site. ATP is bound by residues Lys308, 367–376 (KPQREGGGNN), Tyr378, 400–403 (MDKI), and Glu426. A Mg(2+)-binding site is contributed by Glu371. Arg452 contributes to the substrate binding site. Residues Lys454 and Glu460 each coordinate ATP. 463-464 (VA) provides a ligand contact to substrate.

The protein belongs to the eukaryotic GSH synthase family. In terms of assembly, homodimer. Requires Mg(2+) as cofactor.

The enzyme catalyses gamma-L-glutamyl-L-cysteine + glycine + ATP = glutathione + ADP + phosphate + H(+). The protein operates within sulfur metabolism; glutathione biosynthesis; glutathione from L-cysteine and L-glutamate: step 2/2. In Dictyostelium discoideum (Social amoeba), this protein is Glutathione synthetase (gshB).